The primary structure comprises 438 residues: Aspartate--tRNA(Asp/Asn) ligase (438 aa).

Residue Glu176 participates in L-aspartate binding. The tract at residues 198–201 is aspartate; it reads QLYK. Arg220 is an L-aspartate binding site. ATP contacts are provided by residues 220-222, 228-230, and Glu361; these read RAE and RHL. Residues Glu361 and Ser364 each contribute to the Mg(2+) site. L-aspartate is bound by residues Ser364 and Arg368. 409 to 412 is an ATP binding site; that stretch reads GADR.

The protein belongs to the class-II aminoacyl-tRNA synthetase family. Type 2 subfamily. In terms of assembly, homodimer. It depends on Mg(2+) as a cofactor.

The protein localises to the cytoplasm. The catalysed reaction is tRNA(Asx) + L-aspartate + ATP = L-aspartyl-tRNA(Asx) + AMP + diphosphate. In terms of biological role, aspartyl-tRNA synthetase with relaxed tRNA specificity since it is able to aspartylate not only its cognate tRNA(Asp) but also tRNA(Asn). Reaction proceeds in two steps: L-aspartate is first activated by ATP to form Asp-AMP and then transferred to the acceptor end of tRNA(Asp/Asn). The chain is Aspartate--tRNA(Asp/Asn) ligase from Methanococcus maripaludis (strain DSM 14266 / JCM 13030 / NBRC 101832 / S2 / LL).